A 345-amino-acid polypeptide reads, in one-letter code: Esterase (345 aa).

A signal peptide spans 1–39 (MSSAMRKTTNSPVVRRLTAAAVALGSCLALAGPAGSAGA). 3 disulfides stabilise this stretch: C73/C103, C156/C180, and C236/C294.

Its subcellular location is the secreted. The protein is Esterase (estA) of Streptomyces scabiei.